Here is a 110-residue protein sequence, read N- to C-terminus: Late cornified envelope-like proline-rich protein 1 (110 aa).

Residues 1–24 (MSSDDKNKPGEPKNEPKQCDPGCE) form a disordered region.

The protein belongs to the cornifin (SPRR) family.

The protein is Late cornified envelope-like proline-rich protein 1 (LELP1) of Bos taurus (Bovine).